Consider the following 100-residue polypeptide: Small ribosomal subunit protein uS14c (100 aa).

Belongs to the universal ribosomal protein uS14 family. As to quaternary structure, part of the 30S ribosomal subunit.

It localises to the plastid. The protein resides in the chloroplast. Binds 16S rRNA, required for the assembly of 30S particles. In Crucihimalaya wallichii (Rock-cress), this protein is Small ribosomal subunit protein uS14c.